Here is a 745-residue protein sequence, read N- to C-terminus: Junction plakoglobin (745 aa).

An N-acetylmethionine modification is found at Met-1. O-linked (GlcNAc) threonine glycosylation is present at Thr-14. Ser-99 and Ser-125 each carry phosphoserine. ARM repeat units lie at residues 132–171 (NYQDDAELATRALPELTKLLNDEDPVVVTKAAMIVNQLSK), 172–215 (KEAS…LSHH), 216–255 (REGLLAIFKSGGIPALVRMLSSPVESVLFYAITTLHNLLL), 258–297 (EGAKMAVRLADGLQKMVPLLNKNNPKFLAITTDCLQLLAY), 298–341 (GNQE…LSVC), 342–381 (PSNKPAIVEAGGMQALGKHLTSNSPRLVQNCLWTLRNLSD), 383–420 (ATKQEGLENVLKILVNQLSVDDVNVLTCATGTLSNLTC), 423–464 (SKNK…HLTS), 470–510 (EMAQ…NLAL), 512–551 (PANHAPLQEAAVIPRLVQLLVKAHQDAQRHVAAGTQQPYT), 574–613 (PMNRMEIFRLNTIPLFVQLLYSSVENIQRVAAGVLCELAQ), and 615–661 (KEAA…PDYR). An interaction with DSC1 and DSG1 region spans residues 132–297 (NYQDDAELAT…TTDCLQLLAY (166 aa)). Ser-182 carries the phosphoserine modification. Residues 574-661 (PMNRMEIFRL…ISEDKNPDYR (88 aa)) form an interaction with DSC1 region. 2 positions are modified to phosphoserine: Ser-665 and Ser-730.

This sequence belongs to the beta-catenin family. Homodimer. Component of an E-cadherin/catenin adhesion complex composed of at least E-cadherin/CDH1 and gamma-catenin/JUP, and possibly alpha-catenin/CTNNA1; the complex is located to adherens junctions. The stable association of CTNNA1 is controversial as CTNNA1 was shown not to bind to F-actin when assembled in the complex. Interacts with MUC1. Interacts with CAV1. Interacts with PTPRJ. Interacts with DSG1. Interacts with DSC1 and DSC2. Interacts with PKP2. Interacts with PKP3 (via N-terminus); the interaction is required for PKP3 localization to desmosome cell-cell junctions. Interacts with DSG4. In terms of processing, may be phosphorylated by FER. Expressed in the heart (at protein level).

Its subcellular location is the cell junction. The protein localises to the adherens junction. The protein resides in the desmosome. It is found in the cytoplasm. It localises to the cytoskeleton. Its subcellular location is the cell membrane. The protein localises to the nucleus. In terms of biological role, common junctional plaque protein. The membrane-associated plaques are architectural elements in an important strategic position to influence the arrangement and function of both the cytoskeleton and the cells within the tissue. The presence of plakoglobin in both the desmosomes and in the intermediate junctions suggests that it plays a central role in the structure and function of submembranous plaques. Acts as a substrate for VE-PTP and is required by it to stimulate VE-cadherin function in endothelial cells. Can replace beta-catenin in E-cadherin/catenin adhesion complexes which are proposed to couple cadherins to the actin cytoskeleton. This is Junction plakoglobin from Rattus norvegicus (Rat).